A 1524-amino-acid chain; its full sequence is DNA polymerase alpha catalytic subunit (1524 aa).

Disordered stretches follow at residues 1 to 53 and 68 to 139; these read MSGD…QKPI and RRRE…KVNP. Residues 20-30 are compositionally biased toward basic and acidic residues; it reads SSRKDTLERLK. Positions 79–96 are enriched in acidic residues; the sequence is EDGEGGDLGYLDEGEEED. Zn(2+) is bound by residues C1333, C1336, C1375, C1378, C1414, C1419, C1440, and C1446. A CysA-type zinc finger spans residues 1333–1378; sequence CPSCSTAFNCPSIISSVCASISKKPATPETEESDSTFWLKLHCPKC. The CysB motif motif lies at 1414–1446; that stretch reads CEDESCKHTTRSPNFRLLGERERGTVCPNYPNC.

This sequence belongs to the DNA polymerase type-B family.

The protein localises to the nucleus. It catalyses the reaction DNA(n) + a 2'-deoxyribonucleoside 5'-triphosphate = DNA(n+1) + diphosphate. Functionally, polymerase alpha in a complex with DNA primase is a replicative polymerase. The protein is DNA polymerase alpha catalytic subunit (POLA) of Arabidopsis thaliana (Mouse-ear cress).